Reading from the N-terminus, the 74-residue chain is Kappa-stichotoxin-Hmg1a (74 aa).

Residues Met-1–Ala-22 form the signal peptide. The propeptide occupies Arg-23 to Arg-39. Residues Cys-42–Cys-74 enclose the ShKT domain. Cystine bridges form between Cys-42–Cys-74, Cys-51–Cys-67, and Cys-56–Cys-71.

Belongs to the sea anemone type 1 potassium channel toxin family. Type 1a subfamily.

It is found in the secreted. Its subcellular location is the nematocyst. In terms of biological role, potently blocks the voltage-gated potassium channel Kv1.1/KCNA1 (Ki=75 pM), KcsA (Ki~1 nM) and moderately blocks Kv1.2/KCNA2 (Ki=2.5 nM) and Kv1.3/KCNA3 (Ki=3.1 nM). Also facilitates acetylcholine release at the avian neuromuscular junction. Blockade and dissociation rate are sensitive to voltage. In Heteractis magnifica (Magnificent sea anemone), this protein is Kappa-stichotoxin-Hmg1a.